A 167-amino-acid polypeptide reads, in one-letter code: Endoribonuclease YbeY (167 aa).

Residues H131, H135, and H141 each contribute to the Zn(2+) site.

This sequence belongs to the endoribonuclease YbeY family. Zn(2+) is required as a cofactor.

The protein localises to the cytoplasm. Its function is as follows. Single strand-specific metallo-endoribonuclease involved in late-stage 70S ribosome quality control and in maturation of the 3' terminus of the 16S rRNA. This is Endoribonuclease YbeY from Rickettsia africae (strain ESF-5).